The chain runs to 400 residues: Putative transposase for insertion sequence element IS5376 (400 aa).

One can recognise an HTH IS21-type domain in the interval 5–67 (GEFFMIKEMY…PFKPYLQKRM (63 aa)). The segment at residues 20-39 (ISDIARELGIDRKTVRKYIH) is a DNA-binding region (H-T-H motif). The interval 35 to 55 (RKYIHSPNPPSKSKRKQRKSK) is disordered. The Integrase catalytic domain maps to 113–287 (YETLPGEQMQ…SPQERWAEES (175 aa)).

Belongs to the transposase IS21/IS408/IS1162 family.

Its function is as follows. Involved in the transposition of the insertion sequence. This Geobacillus stearothermophilus (Bacillus stearothermophilus) protein is Putative transposase for insertion sequence element IS5376.